We begin with the raw amino-acid sequence, 89 residues long: Small ribosomal subunit protein bS16 (89 aa).

It belongs to the bacterial ribosomal protein bS16 family.

This Psychrobacter arcticus (strain DSM 17307 / VKM B-2377 / 273-4) protein is Small ribosomal subunit protein bS16.